The sequence spans 80 residues: Putative defensin-like protein 28 (80 aa).

An N-terminal signal peptide occupies residues 1–22 (MLRANVVVSLVIFAALMQCMNG).

It belongs to the DEFL family.

The protein localises to the secreted. In Arabidopsis thaliana (Mouse-ear cress), this protein is Putative defensin-like protein 28.